The sequence spans 445 residues: Cyclic GMP-AMP synthase-like receptor 1 (445 aa).

3 residues coordinate Mg(2+): Glu-70, Asp-72, and Asp-186. 70 to 72 is a binding site for ATP; sequence EYD. GTP-binding positions include Asp-186 and 232-239; that span reads RTSFYEAE. ATP-binding positions include 236–239, Lys-257, and 270–274; these read YEAE and SYHIK. Residues 357–445 form a disordered region; the sequence is LNDDNENSVH…KSKTTTPKPS (89 aa). Residues 377 to 398 are compositionally biased toward basic and acidic residues; it reads QKMEKTSTESEQKKPTETKPNA. A compositionally biased stretch (low complexity) spans 435–445; sequence TKSKTTTPKPS.

Belongs to the mab-21 family. The cofactor is Mg(2+). Requires Mn(2+) as cofactor.

It carries out the reaction GTP + ATP = 3',2'-cGAMP + 2 diphosphate. The enzyme catalyses GTP + ATP = pppA(2'-5')pG + diphosphate. It catalyses the reaction pppA(2'-5')pG = 3',2'-cGAMP + diphosphate. With respect to regulation, the enzyme activity is specifically activated by double-stranded RNA (dsRNA). Functionally, nucleotidyltransferase that catalyzes the formation of cyclic GMP-AMP (3',2'-cGAMP) from ATP and GTP and plays a key role in innate immunity. Synthesizes 3',2'-cGAMP in a two-step reaction through production of the linear intermediate pppA(2'-5')pG. Acts as a key sensor of double-stranded RNA (dsRNA), the presence of dsRNA in the cytoplasm being a danger signal that triggers the immune responses. Directly binds dsRNA, activating the nucleotidyltransferase activity, leading to synthesis of 3',2'-cGAMP, a second messenger that binds to and activates Sting, thereby triggering the antiviral immune response via activation of the NF-kappa-B transcription factor Rel (Relish). This Drosophila erecta (Fruit fly) protein is Cyclic GMP-AMP synthase-like receptor 1.